A 576-amino-acid chain; its full sequence is Proline--tRNA ligase (576 aa).

Belongs to the class-II aminoacyl-tRNA synthetase family. ProS type 1 subfamily. In terms of assembly, homodimer.

It localises to the cytoplasm. It catalyses the reaction tRNA(Pro) + L-proline + ATP = L-prolyl-tRNA(Pro) + AMP + diphosphate. Functionally, catalyzes the attachment of proline to tRNA(Pro) in a two-step reaction: proline is first activated by ATP to form Pro-AMP and then transferred to the acceptor end of tRNA(Pro). As ProRS can inadvertently accommodate and process non-cognate amino acids such as alanine and cysteine, to avoid such errors it has two additional distinct editing activities against alanine. One activity is designated as 'pretransfer' editing and involves the tRNA(Pro)-independent hydrolysis of activated Ala-AMP. The other activity is designated 'posttransfer' editing and involves deacylation of mischarged Ala-tRNA(Pro). The misacylated Cys-tRNA(Pro) is not edited by ProRS. The polypeptide is Proline--tRNA ligase (Finegoldia magna (strain ATCC 29328 / DSM 20472 / WAL 2508) (Peptostreptococcus magnus)).